We begin with the raw amino-acid sequence, 256 residues long: Thiazole synthase (256 aa).

Lys96 serves as the catalytic Schiff-base intermediate with DXP. 1-deoxy-D-xylulose 5-phosphate-binding positions include Gly157, 183 to 184, and 205 to 206; these read AG and NT.

This sequence belongs to the ThiG family. As to quaternary structure, homotetramer. Forms heterodimers with either ThiH or ThiS.

The protein resides in the cytoplasm. It catalyses the reaction [ThiS sulfur-carrier protein]-C-terminal-Gly-aminoethanethioate + 2-iminoacetate + 1-deoxy-D-xylulose 5-phosphate = [ThiS sulfur-carrier protein]-C-terminal Gly-Gly + 2-[(2R,5Z)-2-carboxy-4-methylthiazol-5(2H)-ylidene]ethyl phosphate + 2 H2O + H(+). It participates in cofactor biosynthesis; thiamine diphosphate biosynthesis. In terms of biological role, catalyzes the rearrangement of 1-deoxy-D-xylulose 5-phosphate (DXP) to produce the thiazole phosphate moiety of thiamine. Sulfur is provided by the thiocarboxylate moiety of the carrier protein ThiS. In vitro, sulfur can be provided by H(2)S. This is Thiazole synthase from Bacillus cytotoxicus (strain DSM 22905 / CIP 110041 / 391-98 / NVH 391-98).